Here is a 388-residue protein sequence, read N- to C-terminus: Chorismate synthase (388 aa).

NADP(+) is bound by residues R39 and R45. Residues 130 to 132, 251 to 252, G296, 311 to 315, and R337 contribute to the FMN site; these read RSS, NA, and KPIPT.

This sequence belongs to the chorismate synthase family. Homotetramer. FMNH2 serves as cofactor.

The enzyme catalyses 5-O-(1-carboxyvinyl)-3-phosphoshikimate = chorismate + phosphate. It participates in metabolic intermediate biosynthesis; chorismate biosynthesis; chorismate from D-erythrose 4-phosphate and phosphoenolpyruvate: step 7/7. Catalyzes the anti-1,4-elimination of the C-3 phosphate and the C-6 proR hydrogen from 5-enolpyruvylshikimate-3-phosphate (EPSP) to yield chorismate, which is the branch point compound that serves as the starting substrate for the three terminal pathways of aromatic amino acid biosynthesis. This reaction introduces a second double bond into the aromatic ring system. This Streptococcus sanguinis (strain SK36) protein is Chorismate synthase.